The primary structure comprises 445 residues: ATP-dependent protease ATPase subunit HslU (445 aa).

Residues I17, 59-64 (GVGKTE), D254, E319, and R391 each bind ATP.

This sequence belongs to the ClpX chaperone family. HslU subfamily. In terms of assembly, a double ring-shaped homohexamer of HslV is capped on each side by a ring-shaped HslU homohexamer. The assembly of the HslU/HslV complex is dependent on binding of ATP.

It localises to the cytoplasm. Its function is as follows. ATPase subunit of a proteasome-like degradation complex; this subunit has chaperone activity. The binding of ATP and its subsequent hydrolysis by HslU are essential for unfolding of protein substrates subsequently hydrolyzed by HslV. HslU recognizes the N-terminal part of its protein substrates and unfolds these before they are guided to HslV for hydrolysis. The chain is ATP-dependent protease ATPase subunit HslU from Pseudomonas savastanoi pv. phaseolicola (strain 1448A / Race 6) (Pseudomonas syringae pv. phaseolicola (strain 1448A / Race 6)).